A 61-amino-acid polypeptide reads, in one-letter code: MDPNCSCAAGDSCTCAGSCKCKECKCTSCKKSCCSCCPVGCAKCAQGCICKGASDKCSCCA.

Position 1 is an N-acetylmethionine (Met-1). The beta stretch occupies residues 1 to 29 (MDPNCSCAAGDSCTCAGSCKCKECKCTSC). Cys-5, Cys-7, Cys-13, Cys-15, Cys-19, Cys-21, Cys-24, Cys-26, Cys-29, Cys-33, Cys-34, Cys-36, Cys-37, Cys-41, Cys-44, Cys-48, Cys-50, and Cys-57 together coordinate a divalent metal cation. The tract at residues 30–61 (KKSCCSCCPVGCAKCAQGCICKGASDKCSCCA) is alpha. Position 58 is a phosphoserine (Ser-58). Residues Cys-59 and Cys-60 each coordinate a divalent metal cation.

Belongs to the metallothionein superfamily. Type 1 family. As to quaternary structure, interacts with EOLA1.

Functionally, metallothioneins have a high content of cysteine residues that bind various heavy metals; these proteins are transcriptionally regulated by both heavy metals and glucocorticoids. In Homo sapiens (Human), this protein is Metallothionein-2.